The primary structure comprises 292 residues: MNSGPGKKPDWLKIKLTSGSSFASTKKLLNKHSLHTVCRSAMCPNLHECWSKGTATFLLLGNVCTRSCRFCAVGTERRPAMPDPEETAKIGEAVKAMKLRHAVLTSVNRDDLADGGAAHWVETIRAIREVNPGVSIECLIPDFQGDEQALDSVMRERPEVLNHNIETVPSRYASVRPQASYERSLAVIERAKRQFRLATKSGMMVGMGETPEEVNAALRDLRAHGCDMVTIGQYLQPTATHLPVSRYVTPEEFERYREIALDAGFRHVQSGPFVRSSYHAEAFEPVEEISNS.

Positions 38, 43, 49, 64, 68, 71, and 277 each coordinate [4Fe-4S] cluster. Residues 50 to 266 form the Radical SAM core domain; the sequence is WSKGTATFLL…REIALDAGFR (217 aa).

It belongs to the radical SAM superfamily. Lipoyl synthase family. It depends on [4Fe-4S] cluster as a cofactor.

It is found in the cytoplasm. It carries out the reaction [[Fe-S] cluster scaffold protein carrying a second [4Fe-4S](2+) cluster] + N(6)-octanoyl-L-lysyl-[protein] + 2 oxidized [2Fe-2S]-[ferredoxin] + 2 S-adenosyl-L-methionine + 4 H(+) = [[Fe-S] cluster scaffold protein] + N(6)-[(R)-dihydrolipoyl]-L-lysyl-[protein] + 4 Fe(3+) + 2 hydrogen sulfide + 2 5'-deoxyadenosine + 2 L-methionine + 2 reduced [2Fe-2S]-[ferredoxin]. It functions in the pathway protein modification; protein lipoylation via endogenous pathway; protein N(6)-(lipoyl)lysine from octanoyl-[acyl-carrier-protein]: step 2/2. In terms of biological role, catalyzes the radical-mediated insertion of two sulfur atoms into the C-6 and C-8 positions of the octanoyl moiety bound to the lipoyl domains of lipoate-dependent enzymes, thereby converting the octanoylated domains into lipoylated derivatives. The protein is Lipoyl synthase of Chlorobaculum parvum (strain DSM 263 / NCIMB 8327) (Chlorobium vibrioforme subsp. thiosulfatophilum).